Here is a 172-residue protein sequence, read N- to C-terminus: Protein 3 (172 aa).

This Northern cereal mosaic virus (NCMV) protein is Protein 3 (3).